The chain runs to 295 residues: 2-dehydropantoate 2-reductase (295 aa).

NADP(+) contacts are provided by residues 9–14 (GPGAVG), Asn-100, and Ala-126. Asn-100 contributes to the substrate binding site. The active-site Proton donor is the Lys-177. The substrate site is built by Asn-181 and Ser-246. Residue Glu-258 coordinates NADP(+).

This sequence belongs to the ketopantoate reductase family.

Its subcellular location is the cytoplasm. The catalysed reaction is (R)-pantoate + NADP(+) = 2-dehydropantoate + NADPH + H(+). The protein operates within cofactor biosynthesis; (R)-pantothenate biosynthesis; (R)-pantoate from 3-methyl-2-oxobutanoate: step 2/2. Functionally, catalyzes the NADPH-dependent reduction of ketopantoate into pantoic acid. The polypeptide is 2-dehydropantoate 2-reductase (Mycobacterium tuberculosis (strain CDC 1551 / Oshkosh)).